A 148-amino-acid polypeptide reads, in one-letter code: Transcriptional regulator MraZ (148 aa).

SpoVT-AbrB domains lie at 5–53 (ETAI…AEKE) and 82–125 (SAVL…SEQA).

It belongs to the MraZ family. As to quaternary structure, forms oligomers.

Its subcellular location is the cytoplasm. The protein resides in the nucleoid. This chain is Transcriptional regulator MraZ, found in Xanthomonas oryzae pv. oryzae (strain MAFF 311018).